A 122-amino-acid chain; its full sequence is UPF0102 protein CTC_01256 (122 aa).

The protein belongs to the UPF0102 family.

This chain is UPF0102 protein CTC_01256, found in Clostridium tetani (strain Massachusetts / E88).